Here is a 92-residue protein sequence, read N- to C-terminus: MLEIEIVYGLPDRQVLKTMQLAEGTTVRAAALQSGLDGIFEDLNLHSAPLGIFGKAVKDDTPLRDGDRIEVYRPLLIDPKEARRKRVQNQEE.

It belongs to the UPF0125 (RnfH) family.

The sequence is that of UPF0125 protein NMA1005 from Neisseria meningitidis serogroup A / serotype 4A (strain DSM 15465 / Z2491).